The sequence spans 267 residues: Neutrophil elastase (267 aa).

Positions methionine 1–alanine 27 are cleaved as a signal peptide. The propeptide occupies serine 28–glutamate 29. A Peptidase S1 domain is found at isoleucine 30–glutamine 247. An intrachain disulfide couples cysteine 55 to cysteine 71. Histidine 70 (charge relay system) is an active-site residue. Asparagine 88 carries N-linked (GlcNAc...) asparagine glycosylation. The active-site Charge relay system is aspartate 117. N-linked (GlcNAc...) asparagine glycans are attached at residues asparagine 124 and asparagine 173. 3 disulfides stabilise this stretch: cysteine 151-cysteine 208, cysteine 181-cysteine 187, and cysteine 198-cysteine 223. Serine 202 serves as the catalytic Charge relay system.

It belongs to the peptidase S1 family. Elastase subfamily. As to quaternary structure, interacts with NOTCH2NL. Interacts with agaphelin, an antihemostatic protein from Anopheles gambiae. In terms of tissue distribution, bone marrow cells. Neutrophil.

It is found in the cytoplasmic vesicle. It localises to the phagosome. The catalysed reaction is Hydrolysis of proteins, including elastin. Preferential cleavage: Val-|-Xaa &gt; Ala-|-Xaa.. Its function is as follows. Serine protease that modifies the functions of natural killer cells, monocytes and granulocytes. Inhibits C5a-dependent neutrophil enzyme release and chemotaxis. Promotes cleavage of GSDMB, thereby inhibiting pyroptosis. Promotes blood coagulation. Through the activation of the platelet fibrinogen receptor integrin alpha-IIb/beta-3, potentiates platelet aggregation induced by a threshold concentration of cathepsin G (CTSG). Cleaves and thus inactivates tissue factor pathway inhibitor (TFPI). Capable of killing E.coli but not S.aureus in vitro; digests outer membrane protein A (ompA) in E.coli and K.pneumoniae. The chain is Neutrophil elastase (ELANE) from Homo sapiens (Human).